The chain runs to 107 residues: U1-lycotoxin-Ls1b (107 aa).

The N-terminal stretch at 1–20 is a signal peptide; that stretch reads MMKVLVVVALLVTLISYSSS. A propeptide spanning residues 21-41 is cleaved from the precursor; it reads EGIDDLEADELLSLMANEQTR. 4 cysteine pairs are disulfide-bonded: C44-C59, C51-C68, C58-C86, and C70-C84.

It belongs to the neurotoxin 19 (CSTX) family. 04 (U1-Lctx) subfamily. In terms of tissue distribution, expressed by the venom gland.

The protein localises to the secreted. This chain is U1-lycotoxin-Ls1b, found in Lycosa singoriensis (Wolf spider).